The chain runs to 637 residues: MNPSPLLDLIDSPQDLRRLDKKQLPRLAGELRAFLLESVGQTGGHFASNLGAVELTIALHYVYDTPEDKLVWDVGHQSYPHKILTGRKNQMHTMRQYGGLAGFPKRCESEYDAFGVGHSSTSIGAALGMAATDKLLGGDRRSVAIIGDGAMTAGQAFEALNCAGDMDVDLLVVLNDNEMSISPNVGALPKYLASNVVRDMHGLLSTVKAQTGKVLDKIPGAMEFAQKVEHKIKTLAEEAEHAKQSLSLFENFGFRYTGPVDGHNVENLVDVLKDLRSRKGPQLLHVITKKGNGYKLAENDPVKYHAVANLPKEGGAQMPSEKEPKPAAKPTYTQVFGKWLCDRAAADSRLVAITPAMREGSGLVEFEQRFPDRYFDVGIAEQHAVTFAGGLACEGMKPVVAIYSTFLQRAYDQLVHDIALQNLPVLFAVDRAGIVGADGPTHAGLYDLSFLRCVPNMIVAAPSDENECRLLLSTCYQADAPAAVRYPRGTGTGAPVSDGMETVEIGKGIIRREGEKTAFIAFGSMVAPALAVAEKLNATVADMRFVKPIDEELIVRLARSHDRIVTLEENAEQGGAGGAVLEVLAKHGICKPVLLLGVADTVTEHGDPKKLLDDLGLSAEAVERRVREWLPDRDAAN.

Thiamine diphosphate contacts are provided by residues histidine 76 and 117 to 119; that span reads GHS. Aspartate 148 serves as a coordination point for Mg(2+). Thiamine diphosphate-binding positions include 149 to 150, asparagine 177, tyrosine 294, and glutamate 381; that span reads GA. Asparagine 177 is a Mg(2+) binding site.

The protein belongs to the transketolase family. DXPS subfamily. Homodimer. Requires Mg(2+) as cofactor. Thiamine diphosphate is required as a cofactor.

The catalysed reaction is D-glyceraldehyde 3-phosphate + pyruvate + H(+) = 1-deoxy-D-xylulose 5-phosphate + CO2. It participates in metabolic intermediate biosynthesis; 1-deoxy-D-xylulose 5-phosphate biosynthesis; 1-deoxy-D-xylulose 5-phosphate from D-glyceraldehyde 3-phosphate and pyruvate: step 1/1. Catalyzes the acyloin condensation reaction between C atoms 2 and 3 of pyruvate and glyceraldehyde 3-phosphate to yield 1-deoxy-D-xylulose-5-phosphate (DXP). This Neisseria gonorrhoeae (strain NCCP11945) protein is 1-deoxy-D-xylulose-5-phosphate synthase.